A 244-amino-acid polypeptide reads, in one-letter code: MTRTTHFGFKTVSETEKAREVAGVFDSVAERYNLMNDLMSGGMHRLWKRFAIEVSGVRTGERVLDIAGGTADLSSLFLEQVGSRGEVWLTDINNSMLTIGRDRLLDEGTAVPVAQCDAEKLPFPTNYFDCVSVAFGLRNMTHKDVALKEMLRVLRPGGCVIVLEFSRIWKPLQRLYDLYSFKVLPAMGGLVAKDRDSYRYLAESIRVHPSQEELKQMMQKAGFERVQYFNLAANAVALHRGYKF.

S-adenosyl-L-methionine is bound by residues Thr-70, Asp-91, and 117–118; that span reads DA.

Belongs to the class I-like SAM-binding methyltransferase superfamily. MenG/UbiE family.

The enzyme catalyses a 2-demethylmenaquinol + S-adenosyl-L-methionine = a menaquinol + S-adenosyl-L-homocysteine + H(+). It catalyses the reaction a 2-methoxy-6-(all-trans-polyprenyl)benzene-1,4-diol + S-adenosyl-L-methionine = a 5-methoxy-2-methyl-3-(all-trans-polyprenyl)benzene-1,4-diol + S-adenosyl-L-homocysteine + H(+). It participates in quinol/quinone metabolism; menaquinone biosynthesis; menaquinol from 1,4-dihydroxy-2-naphthoate: step 2/2. The protein operates within cofactor biosynthesis; ubiquinone biosynthesis. Its function is as follows. Methyltransferase required for the conversion of demethylmenaquinol (DMKH2) to menaquinol (MKH2) and the conversion of 2-polyprenyl-6-methoxy-1,4-benzoquinol (DDMQH2) to 2-polyprenyl-3-methyl-6-methoxy-1,4-benzoquinol (DMQH2). The polypeptide is Ubiquinone/menaquinone biosynthesis C-methyltransferase UbiE (Nitrosospira multiformis (strain ATCC 25196 / NCIMB 11849 / C 71)).